A 499-amino-acid chain; its full sequence is Aspartyl/glutamyl-tRNA(Asn/Gln) amidotransferase subunit B (499 aa).

This sequence belongs to the GatB/GatE family. GatB subfamily. In terms of assembly, heterotrimer of A, B and C subunits.

It catalyses the reaction L-glutamyl-tRNA(Gln) + L-glutamine + ATP + H2O = L-glutaminyl-tRNA(Gln) + L-glutamate + ADP + phosphate + H(+). The catalysed reaction is L-aspartyl-tRNA(Asn) + L-glutamine + ATP + H2O = L-asparaginyl-tRNA(Asn) + L-glutamate + ADP + phosphate + 2 H(+). Functionally, allows the formation of correctly charged Asn-tRNA(Asn) or Gln-tRNA(Gln) through the transamidation of misacylated Asp-tRNA(Asn) or Glu-tRNA(Gln) in organisms which lack either or both of asparaginyl-tRNA or glutaminyl-tRNA synthetases. The reaction takes place in the presence of glutamine and ATP through an activated phospho-Asp-tRNA(Asn) or phospho-Glu-tRNA(Gln). The protein is Aspartyl/glutamyl-tRNA(Asn/Gln) amidotransferase subunit B of Bifidobacterium longum (strain DJO10A).